The primary structure comprises 586 residues: Ezrin (586 aa).

Positions 2–295 (PKPINVRVTT…GNHELYMRRR (294 aa)) constitute an FERM domain. Lysine 60 bears the N6-acetyllysine mark. The [IL]-x-C-x-x-[DE] motif signature appears at 115 to 120 (IYCPPE). Position 146 is a phosphotyrosine; by PDGFR (tyrosine 146). An interaction with SCYL3 region spans residues 244–586 (EIRNISFNDK…KQRIDEFEAM (343 aa)). A coiled-coil region spans residues 302–462 (VQQMKAQARE…QDDLVKTKEE (161 aa)). Residues 306–338 (KAQAREEKHQKQLERQQLETEKKRRETVEREKE) form a disordered region. The span at 308–338 (QAREEKHQKQLERQQLETEKKRRETVEREKE) shows a compositional bias: basic and acidic residues. Phosphoserine is present on serine 366. The residue at position 478 (tyrosine 478) is a Phosphotyrosine. Position 535 is a phosphoserine (serine 535). Threonine 567 is modified (phosphothreonine; by ROCK2 and PKC/PRKCI).

Interacts with PODXL and NHERF2. Found in a complex with EZR, PODXL and NHERF2. Interacts with PALS1. Interacts with MCC, PLEKHG6, SCYL3/PACE1, NHERF1 and TMEM8B. Interacts (when phosphorylated) with FES/FPS. Interacts with dimeric S100P, the interaction may be activating through unmasking of F-actin binding sites. Identified in complexes that contain VIM, EZR, AHNAK, BFSP1, BFSP2, ANK2, PLEC, PRX and spectrin. Detected in a complex composed of at least EZR, AHNAK, PPL and PRX. Interacts with PDPN (via cytoplasmic domain); activates RHOA and promotes epithelial-mesenchymal transition. Interacts with SPN/CD43 cytoplasmic tail, CD44 and ICAM2. Interacts with SLC9A3; interaction targets SLC9A3 to the apical membrane. Interacts with SLC9A1; regulates interactions of SLC9A1 with cytoskeletal and promotes stress fiber formation. Interacts with CLIC5; may work together in a complex which also includes RDX and MYO6 to stabilize linkages between the plasma membrane and subjacent actin cytoskeleton at the base of stereocilia. Phosphorylated by tyrosine-protein kinases. Phosphorylation by ROCK2 suppresses the head-to-tail association of the N-terminal and C-terminal halves resulting in an opened conformation which is capable of actin and membrane-binding. In terms of processing, S-nitrosylation is induced by interferon-gamma and oxidatively-modified low-densitity lipoprotein (LDL(ox)) possibly implicating the iNOS-S100A8/9 transnitrosylase complex. In terms of tissue distribution, glomerular epithelium cell (podocyte). Expressed in cerebrum, cerebellum and hippocampus (at protein level). Expressed in the small intestine, lung, kidney and ovaries.

The protein localises to the apical cell membrane. Its subcellular location is the cell projection. It is found in the microvillus membrane. It localises to the ruffle membrane. The protein resides in the cytoplasm. The protein localises to the cell cortex. Its subcellular location is the cytoskeleton. It is found in the microvillus. Its activity is regulated as follows. A head-to-tail association, of the N-terminal and C-terminal halves results in a closed conformation (inactive form) which is incapable of actin or membrane-binding. Probably involved in connections of major cytoskeletal structures to the plasma membrane. In epithelial cells, required for the formation of microvilli and membrane ruffles on the apical pole. Along with PLEKHG6, required for normal macropinocytosis. The sequence is that of Ezrin (Ezr) from Rattus norvegicus (Rat).